Consider the following 509-residue polypeptide: Maturase K (509 aa).

It belongs to the intron maturase 2 family. MatK subfamily.

The protein resides in the plastid. It localises to the chloroplast. In terms of biological role, usually encoded in the trnK tRNA gene intron. Probably assists in splicing its own and other chloroplast group II introns. The chain is Maturase K from Nicotiana tomentosiformis (Tobacco).